Here is a 547-residue protein sequence, read N- to C-terminus: GMP synthase [glutamine-hydrolyzing] (547 aa).

The Glutamine amidotransferase type-1 domain maps to 12 to 210 (KVLILDFGSQ…VLEIAGAKPD (199 aa)). The Nucleophile role is filled by cysteine 89. Catalysis depends on residues histidine 184 and glutamate 186. In terms of domain architecture, GMPS ATP-PPase spans 211 to 403 (WIMRDHIEEA…LGLPPEMVYR (193 aa)). 238–244 (SGGVDSS) serves as a coordination point for ATP.

In terms of assembly, homodimer.

It carries out the reaction XMP + L-glutamine + ATP + H2O = GMP + L-glutamate + AMP + diphosphate + 2 H(+). It participates in purine metabolism; GMP biosynthesis; GMP from XMP (L-Gln route): step 1/1. Its function is as follows. Catalyzes the synthesis of GMP from XMP. This chain is GMP synthase [glutamine-hydrolyzing], found in Ralstonia nicotianae (strain ATCC BAA-1114 / GMI1000) (Ralstonia solanacearum).